The sequence spans 179 residues: Large ribosomal subunit protein uL6 (179 aa).

It belongs to the universal ribosomal protein uL6 family. As to quaternary structure, part of the 50S ribosomal subunit.

In terms of biological role, this protein binds to the 23S rRNA, and is important in its secondary structure. It is located near the subunit interface in the base of the L7/L12 stalk, and near the tRNA binding site of the peptidyltransferase center. This is Large ribosomal subunit protein uL6 from Geobacter sulfurreducens (strain ATCC 51573 / DSM 12127 / PCA).